The sequence spans 160 residues: Arginine repressor (160 aa).

The protein belongs to the ArgR family.

The protein resides in the cytoplasm. Its pathway is amino-acid biosynthesis; L-arginine biosynthesis [regulation]. Its function is as follows. Regulates arginine biosynthesis genes. This is Arginine repressor from Anaeromyxobacter sp. (strain K).